Reading from the N-terminus, the 449-residue chain is Glucose-6-phosphate isomerase (449 aa).

Glutamate 290 functions as the Proton donor in the catalytic mechanism. Residues histidine 311 and lysine 425 contribute to the active site.

It belongs to the GPI family.

It localises to the cytoplasm. It carries out the reaction alpha-D-glucose 6-phosphate = beta-D-fructose 6-phosphate. It functions in the pathway carbohydrate biosynthesis; gluconeogenesis. It participates in carbohydrate degradation; glycolysis; D-glyceraldehyde 3-phosphate and glycerone phosphate from D-glucose: step 2/4. In terms of biological role, catalyzes the reversible isomerization of glucose-6-phosphate to fructose-6-phosphate. In Clostridioides difficile (strain 630) (Peptoclostridium difficile), this protein is Glucose-6-phosphate isomerase.